The following is a 340-amino-acid chain: Manganese-dependent ADP-ribose/CDP-alcohol diphosphatase (340 aa).

The residue at position 1 (methionine 1) is an N-acetylmethionine. The Zn(2+) site is built by aspartate 25, glutamine 27, aspartate 74, asparagine 110, histidine 241, histidine 278, and histidine 280.

Belongs to the ADPRibase-Mn family. As to quaternary structure, monomer. The cofactor is Mg(2+).

The enzyme catalyses CDP-choline + H2O = phosphocholine + CMP + 2 H(+). It catalyses the reaction ADP-D-ribose + H2O = D-ribose 5-phosphate + AMP + 2 H(+). The catalysed reaction is CDP-glycerol + H2O = sn-glycerol 3-phosphate + CMP + 2 H(+). In terms of biological role, hydrolyzes ADP-ribose, IDP-ribose, CDP-glycerol, CDP-choline and CDP-ethanolamine, but not other non-reducing ADP-sugars or CDP-glucose. May be involved in immune cell signaling as suggested by the second-messenger role of ADP-ribose, which activates TRPM2 as a mediator of oxidative/nitrosative stress. The sequence is that of Manganese-dependent ADP-ribose/CDP-alcohol diphosphatase (Adprm) from Mus musculus (Mouse).